Consider the following 84-residue polypeptide: Large ribosomal subunit protein bL27 (84 aa).

It belongs to the bacterial ribosomal protein bL27 family.

The sequence is that of Large ribosomal subunit protein bL27 from Campylobacter lari (strain RM2100 / D67 / ATCC BAA-1060).